The following is an 86-amino-acid chain: Large ribosomal subunit protein bL31B (86 aa).

The protein belongs to the bacterial ribosomal protein bL31 family. Type B subfamily. Part of the 50S ribosomal subunit.

The chain is Large ribosomal subunit protein bL31B from Cupriavidus metallidurans (strain ATCC 43123 / DSM 2839 / NBRC 102507 / CH34) (Ralstonia metallidurans).